Reading from the N-terminus, the 788-residue chain is Mediator of RNA polymerase II transcription subunit 15 (788 aa).

Residues 9–73 (DWRSTAFRQK…IHFRDIHNKK (65 aa)) are interaction with SREBF1. Disordered regions lie at residues 95–139 (GAAG…MAPH) and 260–329 (QQQA…PLVS). The span at 108–117 (QSLGGMGSLG) shows a compositional bias: gly residues. Residues 260 to 269 (QQQALQAQPP) show a composition bias toward low complexity. The segment covering 270-284 (IQQPPMQQPQPPPSQ) has biased composition (pro residues). Composition is skewed to low complexity over residues 285–294 (ALPQQLQQMH) and 309–329 (PVAQNQPSQLPPQSQTQPLVS). Arg349 carries the post-translational modification Asymmetric dimethylarginine. Positions 412-530 (SSSIPLGRQP…PAGSSQAEEQ (119 aa)) are disordered. Positions 426-446 (SQSSLPMLSSPSPGQQVQTPQ) are enriched in low complexity. The segment covering 447–459 (SMPPPPQPSPQPG) has biased composition (pro residues). The span at 460–482 (QPSSQPNSNVSSGPAPSPSSFLP) shows a compositional bias: low complexity. Polar residues-rich tracts occupy residues 493-503 (VTARTPQNFSV) and 511-529 (TPVNPSSVMSPAGSSQAEE). The Nuclear localization signal motif lies at 547–564 (RRMINKIDKNEDRKKDLS). Thr603 carries the phosphothreonine modification.

This sequence belongs to the Mediator complex subunit 15 family. In terms of assembly, component of the Mediator complex, which is composed of MED1, MED4, MED6, MED7, MED8, MED9, MED10, MED11, MED12, MED13, MED13L, MED14, MED15, MED16, MED17, MED18, MED19, MED20, MED21, MED22, MED23, MED24, MED25, MED26, MED27, MED29, MED30, MED31, CCNC, CDK8 and CDC2L6/CDK11. The MED12, MED13, CCNC and CDK8 subunits form a distinct module termed the CDK8 module. Mediator containing the CDK8 module is less active than Mediator lacking this module in supporting transcriptional activation. Individual preparations of the Mediator complex lacking one or more distinct subunits have been variously termed ARC, CRSP, DRIP, PC2, SMCC and TRAP. Interacts with SMAD2, SMAD3, SREBF1 and SREBF2. Interacts with WWTR1. Interacts with TRIM11. Ubiquitinated by TRIM11, leading to proteasomal degradation. As to expression, expressed in all tissues examined, including heart, brain, lung, spleen, thymus, pancreas, blood leukocyte and placenta. However, the level of expression varied, with highest expression in the placenta and peripheral blood and lowest in the pancreas and kidney.

It localises to the cytoplasm. Its subcellular location is the nucleus. Functionally, component of the Mediator complex, a coactivator involved in the regulated transcription of nearly all RNA polymerase II-dependent genes. Mediator functions as a bridge to convey information from gene-specific regulatory proteins to the basal RNA polymerase II transcription machinery. Mediator is recruited to promoters by direct interactions with regulatory proteins and serves as a scaffold for the assembly of a functional preinitiation complex with RNA polymerase II and the general transcription factors. Required for cholesterol-dependent gene regulation. Positively regulates the Nodal signaling pathway. The polypeptide is Mediator of RNA polymerase II transcription subunit 15 (MED15) (Homo sapiens (Human)).